The sequence spans 206 residues: Fibroblast growth factor 4 (206 aa).

A signal peptide spans 1-29 (MAGPGTAAAALLPAVLLAVLAPWAGRGGA).

Belongs to the heparin-binding growth factors family. In terms of assembly, interacts with FGFR1, FGFR2, FGFR3 and FGFR4. Affinity between fibroblast growth factors (FGFs) and their receptors is increased by heparan sulfate glycosaminoglycans that function as coreceptors.

The protein resides in the secreted. Functionally, plays an important role in the regulation of embryonic development, cell proliferation, and cell differentiation. Required for normal limb and cardiac valve development during embryogenesis. May play a role in embryonic molar tooth bud development via inducing the expression of MSX1, MSX2 and MSX1-mediated expression of SDC1 in dental mesenchyme cells. The protein is Fibroblast growth factor 4 of Bos taurus (Bovine).